The sequence spans 597 residues: Bromodomain-containing protein 9 (597 aa).

Residues 1–10 (MGKKHKKHKA) are compositionally biased toward basic residues. 2 disordered regions span residues 1–25 (MGKKHKKHKAEWRSSYEDYADKPLE) and 38–138 (EVTE…ENES). Composition is skewed to basic and acidic residues over residues 11-25 (EWRSSYEDYADKPLE) and 50-62 (SYYDDRSDHERER). A Phosphoserine modification is found at serine 56. Residues 63–73 (HKEKKKKKKKK) are compositionally biased toward basic residues. A compositionally biased stretch (basic and acidic residues) spans 74 to 85 (SEKEKHLDDEER). A compositionally biased stretch (basic residues) spans 86 to 97 (RKRKEEKKRKRE). Positions 111–126 (DPGKKVEVEPPPDRPV) are enriched in basic and acidic residues. One can recognise a Bromo domain in the interval 136–240 (NESTPIQQLL…HAGFKMMSKQ (105 aa)). The interval 214–216 (TYN) is histone H4K5ac H4K8ac and histone H4K5bu H4K8bu binding. Lysine 373 is subject to N6-acetyllysine; alternate. Lysine 373 participates in a covalent cross-link: Glycyl lysine isopeptide (Lys-Gly) (interchain with G-Cter in SUMO2); alternate. The segment at 536-597 (EAQAERGGSR…SPEPAASAKT (62 aa)) is disordered. Over residues 544–556 (SRPSSNLSSLSNA) the composition is skewed to low complexity. Phosphoserine is present on residues serine 566 and serine 588.

Binds acetylated histones H3 and H4. Binds butyrylated histone H4. Component of the multiprotein chromatin-remodeling subcomplex SWI/SNF called GBAF, which includes at least BICRA or BICRAL (mutually exclusive), BRD9, SS18, the core BAF subunits, SMARCA2/BRM, SMARCA4/BRG1/BAF190A, ACTL6A/BAF53, SMARCC1/BAF155, and SMARCD1/BAF60A. Interacts (via N-terminal bromodomain) with acetylated RAD54. Interacts (via C-terminus) with RAD51.

It is found in the nucleus. In terms of biological role, plays a role in chromatin remodeling and regulation of transcription. Acts as a chromatin reader that recognizes and binds acylated histones: binds histones that are acetylated and/or butyrylated. Component of SWI/SNF chromatin remodeling subcomplex GBAF that carries out key enzymatic activities, changing chromatin structure by altering DNA-histone contacts within a nucleosome in an ATP-dependent manner. Also orchestrates the RAD51-RAD54 complex formation and thereby plays a role in homologous recombination (HR). This Homo sapiens (Human) protein is Bromodomain-containing protein 9 (BRD9).